The sequence spans 147 residues: Myoglobin (147 aa).

The Globin domain maps to 2–137; sequence ADFEMVLKHW…VMTTIIADIE (136 aa). His60 is a nitrite binding site. Residue His60 coordinates O2. Residue His89 coordinates heme b.

The protein belongs to the globin family. In terms of assembly, monomeric.

It localises to the cytoplasm. The protein localises to the sarcoplasm. The catalysed reaction is Fe(III)-heme b-[protein] + nitric oxide + H2O = Fe(II)-heme b-[protein] + nitrite + 2 H(+). The enzyme catalyses H2O2 + AH2 = A + 2 H2O. In terms of biological role, monomeric heme protein which primary function is to store oxygen and facilitate its diffusion within muscle tissues. Reversibly binds oxygen through a pentacoordinated heme iron and enables its timely and efficient release as needed during periods of heightened demand. Depending on the oxidative conditions of tissues and cells, and in addition to its ability to bind oxygen, it also has a nitrite reductase activity whereby it regulates the production of bioactive nitric oxide. Under stress conditions, like hypoxia and anoxia, it also protects cells against reactive oxygen species thanks to its pseudoperoxidase activity. This Makaira nigricans (Atlantic blue marlin) protein is Myoglobin (mb).